Reading from the N-terminus, the 591-residue chain is Aspartate--tRNA(Asp/Asn) ligase (591 aa).

Glu-174 serves as a coordination point for L-aspartate. Residues 198-201 (QLFK) are aspartate. Arg-220 serves as a coordination point for L-aspartate. Residues 220 to 222 (RDE) and Gln-229 contribute to the ATP site. His-450 provides a ligand contact to L-aspartate. Position 483 (Glu-483) interacts with ATP. Arg-490 lines the L-aspartate pocket. 535 to 538 (GLDR) serves as a coordination point for ATP.

This sequence belongs to the class-II aminoacyl-tRNA synthetase family. Type 1 subfamily. Homodimer.

Its subcellular location is the cytoplasm. It catalyses the reaction tRNA(Asx) + L-aspartate + ATP = L-aspartyl-tRNA(Asx) + AMP + diphosphate. Its function is as follows. Aspartyl-tRNA synthetase with relaxed tRNA specificity since it is able to aspartylate not only its cognate tRNA(Asp) but also tRNA(Asn). Reaction proceeds in two steps: L-aspartate is first activated by ATP to form Asp-AMP and then transferred to the acceptor end of tRNA(Asp/Asn). This chain is Aspartate--tRNA(Asp/Asn) ligase, found in Azotobacter vinelandii (strain DJ / ATCC BAA-1303).